Reading from the N-terminus, the 303-residue chain is Tyrosine recombinase XerC (303 aa).

The 87-residue stretch at 6 to 92 (ASLAPQVEAF…ALRSFLNWLV (87 aa)) folds into the Core-binding (CB) domain. Residues 113–292 (HLPKNIDVDE…DFQHLATVYD (180 aa)) form the Tyr recombinase domain. Residues arginine 152, lysine 176, histidine 244, arginine 247, and histidine 270 contribute to the active site. Catalysis depends on tyrosine 279, which acts as the O-(3'-phospho-DNA)-tyrosine intermediate.

This sequence belongs to the 'phage' integrase family. XerC subfamily. Forms a cyclic heterotetrameric complex composed of two molecules of XerC and two molecules of XerD, in which XerC interacts with XerD via its C-terminal region, XerD interacts with XerC via its C-terminal region and so on.

The protein localises to the cytoplasm. With respect to regulation, ftsK may regulate the catalytic switch between XerC and XerD in the heterotetrameric complex during the two steps of the recombination process. In terms of biological role, site-specific tyrosine recombinase, which acts by catalyzing the cutting and rejoining of the recombining DNA molecules. Binds cooperatively to specific DNA consensus sequences that are separated from XerD binding sites by a short central region, forming the heterotetrameric XerC-XerD complex that recombines DNA substrates. The complex is essential to convert dimers of the bacterial chromosome into monomers to permit their segregation at cell division. It also contributes to the segregational stability of plasmids. In the complex XerC specifically exchanges the top DNA strands. The chain is Tyrosine recombinase XerC from Yersinia pestis.